A 264-amino-acid polypeptide reads, in one-letter code: Tryptophan synthase alpha chain (264 aa).

Residues glutamate 49 and aspartate 60 each act as proton acceptor in the active site.

It belongs to the TrpA family. In terms of assembly, tetramer of two alpha and two beta chains.

It carries out the reaction (1S,2R)-1-C-(indol-3-yl)glycerol 3-phosphate + L-serine = D-glyceraldehyde 3-phosphate + L-tryptophan + H2O. Its pathway is amino-acid biosynthesis; L-tryptophan biosynthesis; L-tryptophan from chorismate: step 5/5. The alpha subunit is responsible for the aldol cleavage of indoleglycerol phosphate to indole and glyceraldehyde 3-phosphate. The polypeptide is Tryptophan synthase alpha chain (Picosynechococcus sp. (strain ATCC 27264 / PCC 7002 / PR-6) (Agmenellum quadruplicatum)).